Here is a 600-residue protein sequence, read N- to C-terminus: MVNNMTDLTAQEPAWQTRDHLDDPVIGELRNRFGPDAFTVQATRTGVPVVWIKREQLLEVGDFLKKLPKPYVMLFDLHGMDERLRTHREGLPAADFSVFYHLISIDRNRDIMLKVALAENDLHVPTFTKLFPNANWYERETWDLFGITFDGHPNLRRIMMPQTWKGHPLRKDYPARATEFSPFELTKAKQDLEMEALTFKPEEWGMKRGTENEDFMFLNLGPNHPSAHGAFRIVLQLDGEEIVDCVPDIGYHHRGAEKMGERQSWHSYIPYTDRIEYLGGCVNEMPYVLAVEKLAGITVPDRVNVIRVMLSELFRINSHLLYISTFIQDVGAMTPVFFAFTDRQKIYDLVEAITGFRMHPAWFRIGGVAHDLPRGWDRLLREFLDWMPKRLASYEKAALQNTILKGRSQGVAAYGAKEALEWGTTGAGLRATGIDFDVRKARPYSGYENFDFEIPVGGGVSDCYTRVMLKVEELRQSLRILEQCLNNMPEGPFKADHPLTTPPPKERTLQHIETLITHFLQVSWGPVMPANESFQMVEATKGINSYYLTSDGSTMSYRTRIRTPSYAHLQQIPAAIRGSLVSDLIVYLGSIDFVMSDVDR.

Residues 1 to 190 (MVNNMTDLTA…SPFELTKAKQ (190 aa)) are NADH dehydrogenase I subunit C. An NADH dehydrogenase I subunit D region spans residues 214–600 (DFMFLNLGPN…IDFVMSDVDR (387 aa)).

In the N-terminal section; belongs to the complex I 30 kDa subunit family. The protein in the C-terminal section; belongs to the complex I 49 kDa subunit family. NDH-1 is composed of 13 different subunits. Subunits NuoB, CD, E, F, and G constitute the peripheral sector of the complex.

The protein localises to the cell inner membrane. The enzyme catalyses a quinone + NADH + 5 H(+)(in) = a quinol + NAD(+) + 4 H(+)(out). Its function is as follows. NDH-1 shuttles electrons from NADH, via FMN and iron-sulfur (Fe-S) centers, to quinones in the respiratory chain. The immediate electron acceptor for the enzyme in this species is believed to be ubiquinone. Couples the redox reaction to proton translocation (for every two electrons transferred, four hydrogen ions are translocated across the cytoplasmic membrane), and thus conserves the redox energy in a proton gradient. This is NADH-quinone oxidoreductase subunit C/D from Escherichia coli O6:H1 (strain CFT073 / ATCC 700928 / UPEC).